The chain runs to 502 residues: MAIKAEEISALLRSQIENYESEMSVTDVGTVLQIGDGIALIHGLNDVMAGELVEFHNGVLGLAQNLEESNVGVVILGPYAGITEGDEVKRTGRIMEVPVGEELIGRVVNPLGQPIDGQGPINTTKTRPVEKKATGVMDRKSVDEPLQTGIKAIDALVPIGRGQRELIIGDRQTGKTTIAIDTILNQKDQGTICIYVAIGQKDSTVRANVEKLRQAGALDYTIVVAASASEPSPLLYIAPYSGVTMGEEFMFNGKHVLIVYDDLTKQAAAYRELSLLLRRPPGREAYPGDVFYLHSRLLERAAKLNDDLGGGSITALPIIETQAGDISAYVPTNVISITDGQIFLQSDLFFSGVRPAINAGQSVSRVGGSAQIKAMKKVAGTLRLDLASYRELESFAQFGSDLDEFTASKLERGKRTVEVLKQDQNKPLPVEHQVLIIYALTKGYLDDIPVVDITRFEDELNHWAESNATELLNEIRETGGLPDAEKFDTAINEFKKSFSKSE.

169-176 (GDRQTGKT) is a binding site for ATP.

Belongs to the ATPase alpha/beta chains family. As to quaternary structure, F-type ATPases have 2 components, CF(1) - the catalytic core - and CF(0) - the membrane proton channel. CF(1) has five subunits: alpha(3), beta(3), gamma(1), delta(1), epsilon(1). CF(0) has three main subunits: a(1), b(2) and c(9-12). The alpha and beta chains form an alternating ring which encloses part of the gamma chain. CF(1) is attached to CF(0) by a central stalk formed by the gamma and epsilon chains, while a peripheral stalk is formed by the delta and b chains.

The protein localises to the cell membrane. It catalyses the reaction ATP + H2O + 4 H(+)(in) = ADP + phosphate + 5 H(+)(out). Produces ATP from ADP in the presence of a proton gradient across the membrane. The alpha chain is a regulatory subunit. In Staphylococcus aureus (strain bovine RF122 / ET3-1), this protein is ATP synthase subunit alpha.